We begin with the raw amino-acid sequence, 61 residues long: UPF0337 protein LMOf2365_2190 (61 aa).

The interval 1-61 is disordered; it reads MSEDKGMKDK…TGDAKKKLSE (61 aa).

This sequence belongs to the UPF0337 (CsbD) family.

The chain is UPF0337 protein LMOf2365_2190 from Listeria monocytogenes serotype 4b (strain F2365).